The primary structure comprises 273 residues: Secretory carrier-associated membrane protein 6 (273 aa).

A disordered region spans residues 1–69 (MHHDPNPFDE…MGDSKSKARE (69 aa)). The Cytoplasmic segment spans residues 1–131 (MHHDPNPFDE…LQKLQYLAFA (131 aa)). Residues 20-30 (NGGGGGGGGGS) are compositionally biased toward gly residues. Residues 68–94 (RELSSWETDLKRREADIKRREEALRNA) are a coiled coil. 4 consecutive transmembrane segments (helical) span residues 132–152 (SWLGIVLCLSWNFIAVIVCWI), 159–179 (LFFLATIYALLGIPLSYLIWY), 194–214 (FGWFFLCYLIHIGFCIIAAIA), and 239–259 (IIGIFYFVGFALFCLETLLSI). Residues 260–273 (GVLQRVYMYFRGNK) lie on the Cytoplasmic side of the membrane.

It belongs to the SCAMP family.

It localises to the cell membrane. It is found in the cytoplasmic vesicle. The protein localises to the secretory vesicle membrane. Functionally, probably involved in membrane trafficking. The polypeptide is Secretory carrier-associated membrane protein 6 (SCAMP6) (Oryza sativa subsp. japonica (Rice)).